A 366-amino-acid chain; its full sequence is GTPase Obg (366 aa).

The region spanning 1-162 (MRFVDEATIN…RRLRLELKIL (162 aa)) is the Obg domain. In terms of domain architecture, OBG-type G spans 163-335 (ADAGLLGLPN…VVDAMWRLRD (173 aa)). Residues 169 to 176 (GLPNAGKS), 194 to 198 (FTTLT), 218 to 221 (DIPG), 288 to 291 (NKID), and 316 to 318 (SAM) contribute to the GTP site. Residues S176 and T196 each coordinate Mg(2+).

The protein belongs to the TRAFAC class OBG-HflX-like GTPase superfamily. OBG GTPase family. In terms of assembly, monomer. The cofactor is Mg(2+).

It localises to the cytoplasm. Functionally, an essential GTPase which binds GTP, GDP and possibly (p)ppGpp with moderate affinity, with high nucleotide exchange rates and a fairly low GTP hydrolysis rate. Plays a role in control of the cell cycle, stress response, ribosome biogenesis and in those bacteria that undergo differentiation, in morphogenesis control. This chain is GTPase Obg, found in Nitratidesulfovibrio vulgaris (strain ATCC 29579 / DSM 644 / CCUG 34227 / NCIMB 8303 / VKM B-1760 / Hildenborough) (Desulfovibrio vulgaris).